The following is a 399-amino-acid chain: Guanine nucleotide-binding protein G(f) subunit alpha (399 aa).

Residues 46 to 399 (TTVKILLLGT…SENVSSMGLF (354 aa)) enclose the G-alpha domain. Positions 49 to 62 (KILLLGTAESGKTT) are G1 motif. Residues 54 to 61 (GTAESGKT), 188 to 194 (LHSRKIT), 221 to 225 (DVGGQ), 290 to 293 (NKYD), and alanine 371 each bind GTP. Residues 186-194 (DILHSRKIT) are G2 motif. Threonine 194 contacts Mg(2+). The tract at residues 217 to 226 (FQMYDVGGQR) is G3 motif. Residues 286–293 (IVFLNKYD) are G4 motif. The interval 369–374 (TVATDT) is G5 motif.

It belongs to the G-alpha family. G proteins are composed of 3 units; alpha, beta and gamma. The alpha chain contains the guanine nucleotide binding site. During embryogenesis, expressed primarily in the developing gut and transiently in the amnioserosa.

In terms of biological role, guanine nucleotide-binding proteins (G proteins) are involved as modulators or transducers in various transmembrane signaling systems. In Drosophila melanogaster (Fruit fly), this protein is Guanine nucleotide-binding protein G(f) subunit alpha (Galphaf).